A 118-amino-acid chain; its full sequence is Ribosome-binding factor A (118 aa).

The protein belongs to the RbfA family. As to quaternary structure, monomer. Binds 30S ribosomal subunits, but not 50S ribosomal subunits or 70S ribosomes.

Its subcellular location is the cytoplasm. One of several proteins that assist in the late maturation steps of the functional core of the 30S ribosomal subunit. Associates with free 30S ribosomal subunits (but not with 30S subunits that are part of 70S ribosomes or polysomes). Required for efficient processing of 16S rRNA. May interact with the 5'-terminal helix region of 16S rRNA. This is Ribosome-binding factor A from Dehalococcoides mccartyi (strain ATCC BAA-2100 / JCM 16839 / KCTC 5957 / BAV1).